Here is a 125-residue protein sequence, read N- to C-terminus: Glycine cleavage system H protein (125 aa).

The Lipoyl-binding domain maps to 22–104 (VATVGITIHA…EGEGWLFKLK (83 aa)). K63 carries the post-translational modification N6-lipoyllysine.

The protein belongs to the GcvH family. In terms of assembly, the glycine cleavage system is composed of four proteins: P, T, L and H. Requires (R)-lipoate as cofactor.

Its function is as follows. The glycine cleavage system catalyzes the degradation of glycine. The H protein shuttles the methylamine group of glycine from the P protein to the T protein. In Brucella abortus (strain 2308), this protein is Glycine cleavage system H protein.